The sequence spans 991 residues: Phosphate metabolism protein 7 (991 aa).

Residues 1-9 are Extracellular-facing; sequence MADSSSTSA. Residues 10 to 30 form a helical membrane-spanning segment; that stretch reads FISTLIIYGLTAVVFVWLFLL. The Cytoplasmic portion of the chain corresponds to 31-91; that stretch reads LRPKNRRVYE…TSVDGYFLLR (61 aa). A helical membrane pass occupies residues 92 to 112; that stretch reads YIGIVGSLSFVGCLLLLPILL. The Extracellular portion of the chain corresponds to 113–138; the sequence is PVNATNGNNLQGFELLSFSNVTNKNR. N-linked (GlcNAc...) asparagine glycosylation is found at N115 and N132. Residues 139-159 traverse the membrane as a helical segment; the sequence is FYAHVFLSWIFFGLFTYVIYK. At 160 to 388 the chain is on the cytoplasmic side; the sequence is ELYYYVVFRH…ERHSRRAVAN (229 aa). Residues 389–409 traverse the membrane as a helical segment; that stretch reads TIMVLLIIFWAFPVAVVGIIS. The Extracellular segment spans residues 410–437; sequence NVNFLTDKVPFLRFINNMPTFLMGVITG. The chain crosses the membrane as a helical span at residues 438-458; sequence LLPTIALVVLMSLVPPFIVML. At 459-471 the chain is on the cytoplasmic side; that stretch reads GKLSGCVTRQETD. The chain crosses the membrane as a helical span at residues 472–492; sequence LYSQAWYYAFAVIQIFLVVTA. At 493–523 the chain is on the extracellular side; that stretch reads TSSASSTVDSIIDRPRSAMTLLANNLPKASN. The chain crosses the membrane as a helical span at residues 524-544; it reads FYIMYFILKGLTGPTWTILQA. Topologically, residues 545–582 are cytoplasmic; the sequence is VNLLLSKVLGRVLDSTPRQKWNRYNTLATPRMGIVYPG. A helical transmembrane segment spans residues 583–603; the sequence is IEILVCIYICYSIIAPILLFF. A topological domain (extracellular) is located at residue S604. A helical transmembrane segment spans residues 605 to 625; sequence TVMLTLLYVAYLYNLNYVFGF. Over 626-637 the chain is Cytoplasmic; it reads SFDLKGRNYPRA. A helical membrane pass occupies residues 638–658; sequence LFQIFVGIYLSEVCLLGLFIM. The Extracellular portion of the chain corresponds to 659–661; the sequence is AKT. A helical transmembrane segment spans residues 662-682; the sequence is WGPLVLEVFWIVVTALAHIYM. The Cytoplasmic segment spans residues 683–991; it reads KRKFIPLFDA…PPDYEPEAKK (309 aa). The disordered stretch occupies residues 749–787; sequence KANLIPDNDGSSENGTPSNPFESGSERASLSGSNAESDS. Residues 757 to 785 show a composition bias toward polar residues; the sequence is DGSSENGTPSNPFESGSERASLSGSNAES.

This sequence belongs to the CSC1 (TC 1.A.17) family.

It localises to the cell membrane. Functionally, acts as an osmosensitive calcium-permeable cation channel. The protein is Phosphate metabolism protein 7 (PHM7) of Saccharomyces cerevisiae (strain ATCC 204508 / S288c) (Baker's yeast).